A 535-amino-acid polypeptide reads, in one-letter code: uncharacterized protein (535 aa).

The chain crosses the membrane as a helical span at residues 8-24; sequence LVVFGSLVFFFGLVKYF. Residue K50 forms a Glycyl lysine isopeptide (Lys-Gly) (interchain with G-Cter in ubiquitin) linkage. Positions 316, 327, 412, 452, and 493 each coordinate Mn(2+).

It belongs to the peptidase M24B family. Mn(2+) is required as a cofactor.

It is found in the membrane. This is an uncharacterized protein from Saccharomyces cerevisiae (strain ATCC 204508 / S288c) (Baker's yeast).